We begin with the raw amino-acid sequence, 127 residues long: Fluoride-specific ion channel FluC 1 (127 aa).

3 helical membrane-spanning segments follow: residues 6-26 (PLVT…GSNL), 29-49 (FVGL…CGSF), and 95-115 (EWAV…VLVG).

The protein belongs to the fluoride channel Fluc/FEX (TC 1.A.43) family.

The protein localises to the cell membrane. The enzyme catalyses fluoride(in) = fluoride(out). In terms of biological role, fluoride-specific ion channel. Important for reducing fluoride concentration in the cell, thus reducing its toxicity. In Haloarcula marismortui (strain ATCC 43049 / DSM 3752 / JCM 8966 / VKM B-1809) (Halobacterium marismortui), this protein is Fluoride-specific ion channel FluC 1.